The primary structure comprises 511 residues: MKFWTKEEEQDIQKIEKNPVRSFSAPDNVDGAKEIHTNLLAPQLGHAIIPSDAQSEGTIPVKELIKSYRALAEYHEVDDAIQEIVDEAIVYENDKEVVWLNLDNTDFSENIKAKINEEFDRVVSLLQMRKHGYKWFRKWYVDSRIYFHKILDKDNNIIELRPLNPMKMELVREIQKETIDGVEVVKGTLEYYVYKQSDYKMPSWMSATNRAQTSFRIPKDAIVFAHSGLMRGCADDPYIIGYLDRAIKPANQLKMLEDALVIYRLARAPERRVFYVDVGNLPTQKAQQYVNGIMQNVKNRVVYDTQTGQVKNTTNAMSMLEDYYLPRREGSKGTEVSTLPGGQSLGDIEDVLYFNRKLYKAMRIPTSRAASEDQTGGINFGQGAEITRDELKFTKFVKRLQTKFETVITDPLKHQLIVNNIITEEEWDANHEKLYVVFNQDSYFEEAKELEILNSRMNAMRDIQDYAGKYYSHKYIQKNILRLSDDQITAMQSEIDEEETNPRFQQDDQGF.

It belongs to the Tevenvirinae portal protein family. Homododecamer. Interacts with the large terminase subunit. Interacts with the major capsid protein. Interacts with the capsid vertex protein.

The protein localises to the virion. In terms of biological role, forms the portal vertex of the capsid. This portal plays critical roles in head assembly, genome packaging, neck/tail attachment, and genome ejection. The portal protein multimerizes as a single ring-shaped homododecamer arranged around a central channel. Binds to the terminase subunits to form the packaging machine. This is Portal protein from Vibrio phage KVP40 (isolate Vibrio parahaemolyticus/Japan/Matsuzaki/1991) (KVP40).